We begin with the raw amino-acid sequence, 135 residues long: Beta-galactoside-binding lectin (135 aa).

N-acetylserine is present on Ser-2. The cysteines at positions 3 and 8 are disulfide-linked. The Galectin domain occupies 5-135 (GPVCTNLGLK…DFTLRSVSWE (131 aa)). A beta-D-galactoside-binding positions include 46–50 (HFNPR), His-54, Asn-63, 70–73 (WGTE), and 70–76 (WGTEQRE).

Homodimer; disulfide-linked. In terms of assembly, (Microbial infection) Interacts with newcastle disease virus protein HN; this interaction inhibits viral adsorption rather than internalization. In terms of tissue distribution, mainly in the intestine (adult), mainly in the skin (embryo).

This protein binds beta-galactoside. May participate in host antiviral defense through specific interaction with glycans on the viral envelope glycoproteins. The chain is Beta-galactoside-binding lectin (CG-1B) from Gallus gallus (Chicken).